The sequence spans 339 residues: N-acetyl-gamma-glutamyl-phosphate reductase (339 aa).

The active site involves Cys145.

It belongs to the NAGSA dehydrogenase family. Type 1 subfamily.

It localises to the cytoplasm. The enzyme catalyses N-acetyl-L-glutamate 5-semialdehyde + phosphate + NADP(+) = N-acetyl-L-glutamyl 5-phosphate + NADPH + H(+). Its pathway is amino-acid biosynthesis; L-arginine biosynthesis; N(2)-acetyl-L-ornithine from L-glutamate: step 3/4. In terms of biological role, catalyzes the NADPH-dependent reduction of N-acetyl-5-glutamyl phosphate to yield N-acetyl-L-glutamate 5-semialdehyde. The sequence is that of N-acetyl-gamma-glutamyl-phosphate reductase from Thermotoga maritima (strain ATCC 43589 / DSM 3109 / JCM 10099 / NBRC 100826 / MSB8).